A 274-amino-acid chain; its full sequence is Large ribosomal subunit protein uL2cz/uL2cy (274 aa).

2 disordered regions span residues 1–22 (MAIH…DSQV) and 223–274 (MNPV…RRTK).

The protein belongs to the universal ribosomal protein uL2 family. Part of the 50S ribosomal subunit.

The protein resides in the plastid. Its subcellular location is the chloroplast. The polypeptide is Large ribosomal subunit protein uL2cz/uL2cy (rpl2-A) (Phaseolus vulgaris (Kidney bean)).